Reading from the N-terminus, the 322-residue chain is Agmatinase (322 aa).

His-136, Asp-160, His-162, Asp-164, Asp-243, and Asp-245 together coordinate Mn(2+).

The protein belongs to the arginase family. Agmatinase subfamily. It depends on Mn(2+) as a cofactor.

The catalysed reaction is agmatine + H2O = urea + putrescine. Its pathway is amine and polyamine biosynthesis; putrescine biosynthesis via agmatine pathway; putrescine from agmatine: step 1/1. Its function is as follows. Catalyzes the formation of putrescine from agmatine. The polypeptide is Agmatinase (Chromobacterium violaceum (strain ATCC 12472 / DSM 30191 / JCM 1249 / CCUG 213 / NBRC 12614 / NCIMB 9131 / NCTC 9757 / MK)).